The chain runs to 156 residues: MASRVLCACVRRLPAAFAPLPRLPTLALARPLSTTLCPEGIRRRPGALQSALALAQVPGTVTHLCRQYSDAPPLTLDGIKDRVLYVLKLYDKIDPEKLSVNSHFMKDLGLDSLDQVEIIMAMEDEFGFEIPDIDAEKLMCPQEIVDYIADKKDVYE.

A mitochondrion-targeting transit peptide spans 1-68; sequence MASRVLCACV…GTVTHLCRQY (68 aa). One can recognise a Carrier domain in the interval 77–152; that stretch reads DGIKDRVLYV…EIVDYIADKK (76 aa). The residue at position 88 (Lys88) is an N6-acetyllysine. Ser112 is subject to O-(pantetheine 4'-phosphoryl)serine.

This sequence belongs to the acyl carrier protein (ACP) family. As to quaternary structure, mammalian complex I is composed of 45 different subunits. Interacts with ETFRF1. Identified in a complex composed of MALSU1, MIEF1 upstream open reading frame protein and NDUFAB1; within the trimeric complex, MIEF1 upstream open reading frame protein functions as a bridging scaffold that interacts with MALSU1 on one side, and with NDUFAB1 on the other side. The complex interacts with the mitochondrial large ribosomal subunit. Interacts with alpha-1-microglobulin chain; this interaction is required for the maintenance of mitochondrial redox homeostasis. Component of the mitochondrial core iron-sulfur cluster (ISC) complex composed of NFS1, LYRM4, NDUFAB1, ISCU, FXN, and FDX2; this complex is a heterohexamer containing two copies of each monomer. Component of the cyteine desulfurase complex composed of NFS1, LYRM4 and NDUFAB1; this complex contributes to the stability and cysteine desulfurase activity of NFS1. In terms of processing, phosphopantetheinylation at Ser-112 is essential for interactions with LYR motif-containing proteins.

It localises to the mitochondrion. Its function is as follows. Carrier of the growing fatty acid chain in fatty acid biosynthesis. Accessory and non-catalytic subunit of the mitochondrial membrane respiratory chain NADH dehydrogenase (Complex I), which functions in the transfer of electrons from NADH to the respiratory chain. Accessory protein, of the core iron-sulfur cluster (ISC) assembly complex, that regulates, in association with LYRM4, the stability and the cysteine desulfurase activity of NFS1 and participates in the [2Fe-2S] clusters assembly on the scaffolding protein ISCU. The core iron-sulfur cluster (ISC) assembly complex is involved in the de novo synthesis of a [2Fe-2S] cluster, the first step of the mitochondrial iron-sulfur protein biogenesis. This process is initiated by the cysteine desulfurase complex (NFS1:LYRM4:NDUFAB1) that produces persulfide which is delivered on the scaffold protein ISCU in a FXN-dependent manner. Then this complex is stabilized by FDX2 which provides reducing equivalents to accomplish the [2Fe-2S] cluster assembly. Finally, the [2Fe-2S] cluster is transferred from ISCU to chaperone proteins, including HSCB, HSPA9 and GLRX5. The chain is Acyl carrier protein, mitochondrial from Mus musculus (Mouse).